Consider the following 322-residue polypeptide: Putative nickel/cobalt efflux system HI_1248 (322 aa).

Transmembrane regions (helical) follow at residues 7–27 (GLVL…WFFL), 54–74 (AGTT…LGPG), 100–120 (LSSL…VVVL), 137–157 (TALL…LRAY), 228–248 (IFVL…LAVL), and 294–314 (LIAG…TTIS).

This sequence belongs to the NiCoT transporter (TC 2.A.52) family.

It localises to the cell membrane. In terms of biological role, efflux system for nickel and cobalt. The polypeptide is Putative nickel/cobalt efflux system HI_1248 (Haemophilus influenzae (strain ATCC 51907 / DSM 11121 / KW20 / Rd)).